Consider the following 673-residue polypeptide: L-type lectin-domain containing receptor kinase SIT2 (673 aa).

A signal peptide spans 1-27 (MVLPKPEMPFFVLLLFLGLGCLRPAAA). Residues 28 to 296 (TDERFVFNGF…FPKPRSKTLE (269 aa)) are Extracellular-facing. The tract at residues 32–270 (FVFNGFTGAN…VLGWSFKMNG (239 aa)) is legume-lectin like. Residues Asn41, Asn60, Asn82, Asn118, Asn138, Asn191, Asn214, Asn235, and Asn276 are each glycosylated (N-linked (GlcNAc...) asparagine). Residues 297–317 (IVLPIASAVLVFAVAAAVFVF) form a helical membrane-spanning segment. The Cytoplasmic portion of the chain corresponds to 318–673 (MRRRRMFSEL…GTFSDLSGGR (356 aa)). The Protein kinase domain maps to 352–631 (FSDKRLLGIG…LEGDVPLPEL (280 aa)). Residues 358 to 366 (LGIGGFGRV) and Lys381 contribute to the ATP site. The active-site Proton acceptor is the Asp477.

It in the C-terminal section; belongs to the protein kinase superfamily. Ser/Thr protein kinase family. In the N-terminal section; belongs to the leguminous lectin family. Mainly expressed in root epidermal cells.

Its subcellular location is the cell membrane. The enzyme catalyses L-seryl-[protein] + ATP = O-phospho-L-seryl-[protein] + ADP + H(+). It catalyses the reaction L-threonyl-[protein] + ATP = O-phospho-L-threonyl-[protein] + ADP + H(+). Its function is as follows. Lectin-domain containing receptor kinase involved in salt stress response. Acts as a negative regulator of salt tolerance. This chain is L-type lectin-domain containing receptor kinase SIT2, found in Oryza sativa subsp. japonica (Rice).